The primary structure comprises 512 residues: tRNA-2-methylthio-N(6)-dimethylallyladenosine synthase (512 aa).

In terms of domain architecture, MTTase N-terminal spans 17-133; it reads RTYEVRTFGC…LPTLLERSAH (117 aa). [4Fe-4S] cluster contacts are provided by cysteine 26, cysteine 62, cysteine 96, cysteine 170, cysteine 174, and cysteine 177. Residues 156 to 392 enclose the Radical SAM core domain; it reads RESAYAGWVS…LALQERISEE (237 aa). The 67-residue stretch at 395-461 folds into the TRAM domain; the sequence is RKLIGTTQEL…PHFLIADGGV (67 aa). A disordered region spans residues 473-512; it reads TELGETPTTAPVGVGLGMPSIKKPEPTTAGGCSTGGCGCE.

The protein belongs to the methylthiotransferase family. MiaB subfamily. In terms of assembly, monomer. Requires [4Fe-4S] cluster as cofactor.

The protein resides in the cytoplasm. It catalyses the reaction N(6)-dimethylallyladenosine(37) in tRNA + (sulfur carrier)-SH + AH2 + 2 S-adenosyl-L-methionine = 2-methylsulfanyl-N(6)-dimethylallyladenosine(37) in tRNA + (sulfur carrier)-H + 5'-deoxyadenosine + L-methionine + A + S-adenosyl-L-homocysteine + 2 H(+). Functionally, catalyzes the methylthiolation of N6-(dimethylallyl)adenosine (i(6)A), leading to the formation of 2-methylthio-N6-(dimethylallyl)adenosine (ms(2)i(6)A) at position 37 in tRNAs that read codons beginning with uridine. This chain is tRNA-2-methylthio-N(6)-dimethylallyladenosine synthase, found in Corynebacterium jeikeium (strain K411).